A 616-amino-acid chain; its full sequence is Chaperone protein HscA (616 aa).

Belongs to the heat shock protein 70 family.

Functionally, chaperone involved in the maturation of iron-sulfur cluster-containing proteins. Has a low intrinsic ATPase activity which is markedly stimulated by HscB. Involved in the maturation of IscU. The chain is Chaperone protein HscA from Shigella boydii serotype 18 (strain CDC 3083-94 / BS512).